Reading from the N-terminus, the 54-residue chain is Photosystem II reaction center protein K (54 aa).

A propeptide spanning residues 1-17 is cleaved from the precursor; the sequence is MFQISLDMISNKINLLG. Residues 29–49 traverse the membrane as a helical segment; the sequence is IVDVLPIIPILFFLLAFVWQA.

The protein belongs to the PsbK family. As to quaternary structure, PSII is composed of 1 copy each of membrane proteins PsbA, PsbB, PsbC, PsbD, PsbE, PsbF, PsbH, PsbI, PsbJ, PsbK, PsbL, PsbM, PsbT, PsbY, PsbZ, Psb30/Ycf12, at least 3 peripheral proteins of the oxygen-evolving complex and a large number of cofactors. It forms dimeric complexes.

The protein localises to the plastid. The protein resides in the chloroplast thylakoid membrane. Its function is as follows. One of the components of the core complex of photosystem II (PSII). PSII is a light-driven water:plastoquinone oxidoreductase that uses light energy to abstract electrons from H(2)O, generating O(2) and a proton gradient subsequently used for ATP formation. It consists of a core antenna complex that captures photons, and an electron transfer chain that converts photonic excitation into a charge separation. The sequence is that of Photosystem II reaction center protein K from Euglena stellata.